Reading from the N-terminus, the 177-residue chain is Probable nicotinate-nucleotide adenylyltransferase (177 aa).

The protein belongs to the NadD family.

It carries out the reaction nicotinate beta-D-ribonucleotide + ATP + H(+) = deamido-NAD(+) + diphosphate. The protein operates within cofactor biosynthesis; NAD(+) biosynthesis; deamido-NAD(+) from nicotinate D-ribonucleotide: step 1/1. In terms of biological role, catalyzes the reversible adenylation of nicotinate mononucleotide (NaMN) to nicotinic acid adenine dinucleotide (NaAD). The polypeptide is Probable nicotinate-nucleotide adenylyltransferase (Nitratiruptor sp. (strain SB155-2)).